The sequence spans 58 residues: UPF0391 membrane protein Patl_4137 (58 aa).

The next 2 helical transmembrane spans lie at 4–24 (WALT…GGIA) and 27–47 (AAGI…LSLV).

This sequence belongs to the UPF0391 family.

Its subcellular location is the cell membrane. The protein is UPF0391 membrane protein Patl_4137 of Pseudoalteromonas atlantica (strain T6c / ATCC BAA-1087).